Here is a 226-residue protein sequence, read N- to C-terminus: Protein FATTY ACID EXPORT 1, chloroplastic (226 aa).

A chloroplast-targeting transit peptide spans 1 to 39 (MASQISQLACFSSTNRQFHFQSRSFPCPMIRPQSFVVKS). A disordered region spans residues 66 to 87 (SKPYSTVDETATNKESITEPVE). A compositionally biased stretch (polar residues) spans 67–80 (KPYSTVDETATNKE). The next 3 helical transmembrane spans lie at 130–150 (LSTG…SLKI), 158–178 (FPYI…NFTA), and 186–206 (FPAG…SYVV).

Belongs to the TMEM14 family. In terms of tissue distribution, expressed in cotyledons, leaves, sepals and pollen.

It localises to the plastid. Its subcellular location is the chloroplast inner membrane. Its function is as follows. Mediates the export of free fatty acid from the plastids. Potentially prefers palmitic acid (C16:0) over oleic acid (C18:1) and stearic acid (C18:0). Not involved in fatty acid activation. Required for biogenesis of the outer pollen cell wall, in particular for the assembly of exine and pollen coat and for the release of ketone wax components. This chain is Protein FATTY ACID EXPORT 1, chloroplastic, found in Arabidopsis thaliana (Mouse-ear cress).